We begin with the raw amino-acid sequence, 346 residues long: Uroporphyrinogen decarboxylase (346 aa).

Substrate is bound by residues 21 to 25, Phe40, Asp71, Tyr146, Ser201, and His316; that span reads RQAGR.

The protein belongs to the uroporphyrinogen decarboxylase family. As to quaternary structure, homodimer.

Its subcellular location is the cytoplasm. It catalyses the reaction uroporphyrinogen III + 4 H(+) = coproporphyrinogen III + 4 CO2. It participates in porphyrin-containing compound metabolism; protoporphyrin-IX biosynthesis; coproporphyrinogen-III from 5-aminolevulinate: step 4/4. Catalyzes the decarboxylation of four acetate groups of uroporphyrinogen-III to yield coproporphyrinogen-III. The protein is Uroporphyrinogen decarboxylase of Rickettsia felis (strain ATCC VR-1525 / URRWXCal2) (Rickettsia azadi).